Consider the following 109-residue polypeptide: MEMEGQNEKKKKDEPKIENRLRRTLMLCITQPSNFRNSIWLINVRDKMRITCSTSSRSVIFFHRHSAGKQFFAYHHHYTCIMYIGLLCMFVLLYMTVIYKLEYYLLTMQ.

A helical membrane pass occupies residues 78-98; it reads YTCIMYIGLLCMFVLLYMTVI.

It localises to the membrane. This is an uncharacterized protein from Saccharomyces cerevisiae (strain ATCC 204508 / S288c) (Baker's yeast).